Reading from the N-terminus, the 649-residue chain is FAS-associated factor 1 (649 aa).

Residues 1-57 (MASNMDREMILADFQACTGIENIDEAITLLEQNNWDLVAAINGVIPQENGILQSDFG) form the UBA domain. Disordered regions lie at residues 56–84 (FGGE…SAFR) and 266–290 (RRTS…VSDS). Over residues 68–82 (PASHPAPASTPSSSA) the composition is skewed to low complexity. S319 bears the Phosphoserine mark. The UBX domain occupies 568–645 (NAEPVSKLRI…NLFPQETLFL (78 aa)). A Phosphothreonine modification is found at T579. A Phosphoserine modification is found at S581.

In terms of assembly, interacts with CDT1 and ATPase VCP/p97. Interacts (via UBA domain) with FAS (via death domain). Interacts (via UBA domain) with NLRP12 (via DAPIN/PYRIN domain).

The protein localises to the nucleus. Functionally, ubiquitin-binding protein. Required for the progression of DNA replication forks by targeting DNA replication licensing factor CDT1 for degradation. Potentiates but cannot initiate FAS-induced apoptosis. This is FAS-associated factor 1 (Faf1) from Mus musculus (Mouse).